The primary structure comprises 149 residues: UPF0179 protein MA_3685 (149 aa).

Belongs to the UPF0179 family.

This is UPF0179 protein MA_3685 from Methanosarcina acetivorans (strain ATCC 35395 / DSM 2834 / JCM 12185 / C2A).